A 265-amino-acid polypeptide reads, in one-letter code: Type 1 encapsulin shell protein (265 aa).

This sequence belongs to the encapsulin family. Family 1 subfamily. As to quaternary structure, multimeric. The encapsulin nanocompartment is formed by 60 subunits. Monomers form pentamers which assemble to form shells. There are 12 pores where the pentamers meet as well as 3-fold axis channels and dimer channels; none are larger than 3-4 Angstroms in diameter. The N-terminus of the protein is inside the shell, the C-terminus is outside. Post-translationally, the initiator methionine is partially removed. When isolated from culture filtrate isoelectric focusing gives 3 bands, none of which are glycosylated.

Its subcellular location is the encapsulin nanocompartment. It is found in the secreted. The protein resides in the cell membrane. In terms of biological role, shell component of a type 1 encapsulin nanocompartment in situ; its cargo protects against oxidative stress at low pH. In situ and in E.coli assembles into proteinaceous shells about 22 nm in diameter with 2.5 nm thick walls. Cargo proteins are targeted to the interior via their C-terminal extensions; empty intact shells can be isolated in E.coli in the absence of cargo protein. There are at least 4 possible cargo proteins, DyP (encoded in the same locus), FolB, BfrB and Rv1762c; DyP and Rv1762c have been identified in vivo. Probably involved in protection against oxidative damage from the host immune response. A T-cell antigen found in bacterial culture cell filtrates, stimulates mouse immune response. Does not have detectable bacteriocin activity. The polypeptide is Type 1 encapsulin shell protein (Mycobacterium tuberculosis (strain ATCC 25618 / H37Rv)).